We begin with the raw amino-acid sequence, 427 residues long: GPI mannosyltransferase 2 (427 aa).

The next 8 helical transmembrane spans lie at 7 to 27, 119 to 139, 164 to 184, 197 to 217, 247 to 267, 318 to 338, 350 to 370, and 404 to 424; these read LTTVFFTVKLVQYLLVYFAPG, ATLLNLVLHYVSVWLLYALTL, FLLAPYSEPLSFAFSFLGMLL, ITLAWYNWLPYTLSGICFSVA, AVLFPCIAGSMMLGIFAYMHY, VPNFLFALPNLVILWYSTVYF, LVYITRALLLIITFFAHVQII, and LYVNWLILWIPLQTVLFACFL.

This sequence belongs to the PIGV family.

It localises to the endoplasmic reticulum membrane. It functions in the pathway glycolipid biosynthesis; glycosylphosphatidylinositol-anchor biosynthesis. Its function is as follows. Mannosyltransferase involved in glycosylphosphatidylinositol-anchor biosynthesis. Transfers the second mannose to the glycosylphosphatidylinositol during GPI precursor assembly. The chain is GPI mannosyltransferase 2 (GPI18) from Eremothecium gossypii (strain ATCC 10895 / CBS 109.51 / FGSC 9923 / NRRL Y-1056) (Yeast).